The primary structure comprises 146 residues: UPF0260 protein Spea_2441 (146 aa).

Belongs to the UPF0260 family.

The chain is UPF0260 protein Spea_2441 from Shewanella pealeana (strain ATCC 700345 / ANG-SQ1).